The chain runs to 370 residues: Phosphoserine aminotransferase (370 aa).

Arg42 contributes to the L-glutamate binding site. Pyridoxal 5'-phosphate contacts are provided by Trp108, Thr158, Asp182, and Gln205. At Lys206 the chain carries N6-(pyridoxal phosphate)lysine. Position 247-248 (Asn247–Thr248) interacts with pyridoxal 5'-phosphate.

It belongs to the class-V pyridoxal-phosphate-dependent aminotransferase family. SerC subfamily. Homodimer. It depends on pyridoxal 5'-phosphate as a cofactor.

The protein localises to the cytoplasm. It carries out the reaction O-phospho-L-serine + 2-oxoglutarate = 3-phosphooxypyruvate + L-glutamate. The catalysed reaction is 4-(phosphooxy)-L-threonine + 2-oxoglutarate = (R)-3-hydroxy-2-oxo-4-phosphooxybutanoate + L-glutamate. The protein operates within amino-acid biosynthesis; L-serine biosynthesis; L-serine from 3-phospho-D-glycerate: step 2/3. It functions in the pathway cofactor biosynthesis; pyridoxine 5'-phosphate biosynthesis; pyridoxine 5'-phosphate from D-erythrose 4-phosphate: step 3/5. Functionally, catalyzes the reversible conversion of 3-phosphohydroxypyruvate to phosphoserine and of 3-hydroxy-2-oxo-4-phosphonooxybutanoate to phosphohydroxythreonine. This Albidiferax ferrireducens (strain ATCC BAA-621 / DSM 15236 / T118) (Rhodoferax ferrireducens) protein is Phosphoserine aminotransferase.